We begin with the raw amino-acid sequence, 397 residues long: DnaJ homolog subfamily A member 1 (397 aa).

Positions 6–68 (TYYDVLGVKP…KKRELYDKGG (63 aa)) constitute a J domain. Lys66 is modified (N6-acetyllysine). Position 83 is a phosphoserine (Ser83). The segment at 121–205 (GATRKLALQK…CNGRKIVREK (85 aa)) adopts a CR-type zinc-finger fold. Positions 134, 137, 150, 153, 177, 180, 193, and 196 each coordinate Zn(2+). CXXCXGXG motif repeat units lie at residues 134–141 (CDKCEGRG), 150–157 (CPNCRGTG), 177–184 (CMECQGHG), and 193–200 (CKSCNGRK). Ser335 is modified (phosphoserine). Positions 352–397 (VEETDEMDQVELVDFDPNQERRRHYNGEAYEDDEHHPRGGVQCQTS) are disordered. A compositionally biased stretch (acidic residues) spans 353-365 (EETDEMDQVELVD). Tyr381 carries the phosphotyrosine modification. Cysteine methyl ester is present on Cys394. Residue Cys394 is the site of S-farnesyl cysteine attachment. The propeptide at 395–397 (QTS) is removed in mature form.

In terms of assembly, identified in a complex with HSPA1B and BAX. Interacts with RNF207.

Its subcellular location is the membrane. The protein localises to the cytoplasm. It is found in the microsome. It localises to the mitochondrion. The protein resides in the nucleus. Its subcellular location is the perinuclear region. In terms of biological role, co-chaperone for HSPA8/Hsc70. Plays a role in protein transport into mitochondria via its role as co-chaperone. Stimulates ATP hydrolysis, but not the folding of unfolded proteins mediated by HSPA1A (in vitro). Promotes apoptosis in response to cellular stress mediated by exposure to anisomycin or UV. Functions as co-chaperone for HSPA1B and negatively regulates the translocation of BAX from the cytosol to mitochondria in response to cellular stress, thereby protecting cells against apoptosis. The sequence is that of DnaJ homolog subfamily A member 1 (Dnaja1) from Mus musculus (Mouse).